The chain runs to 289 residues: MRHPDFPSAVAVPPAWQASLRLRFAARGERTVLAARQHRGPLMVQKPLYPEGDICHAVILHPPAGVAGGDTLDIALHAEAGTHAVIATPGATKWYKSLGRDASQHVRLTVEEGARLDWLPQENIVFDDARARIATELSIAPGGSAIGWDAVVLGRQASGEQWNRGVLWLDTQVRCNGHALWIEQSQLDAGSPLRGAVAGLDGMSVLGTLWAVGHGATQELAESLAERLPYAAGLRAGVTCLSSPAQSMLLVRVLGRQMEAVRHVMVDAWSALREPIHGVPARPLRLWAT.

This sequence belongs to the UreD family. In terms of assembly, ureD, UreF and UreG form a complex that acts as a GTP-hydrolysis-dependent molecular chaperone, activating the urease apoprotein by helping to assemble the nickel containing metallocenter of UreC. The UreE protein probably delivers the nickel.

The protein localises to the cytoplasm. Required for maturation of urease via the functional incorporation of the urease nickel metallocenter. The polypeptide is Urease accessory protein UreD (Cupriavidus pinatubonensis (strain JMP 134 / LMG 1197) (Cupriavidus necator (strain JMP 134))).